Here is a 142-residue protein sequence, read N- to C-terminus: Hemoglobin subunit alpha-1 (142 aa).

An N-acetylserine modification is found at Ser1. Residues 1–142 (SLSDKDKAAV…VALALAERYR (142 aa)) form the Globin domain. Residue His59 coordinates O2. His88 is a heme b binding site.

This sequence belongs to the globin family. In terms of assembly, hb1 is a heterotetramer of two alpha-1 chains and two beta chains. HbC is a heterotetramer of two alpha-1 chains and two beta-C chains. Red blood cells.

Involved in oxygen transport from gills to the various peripheral tissues. This Trematomus newnesi (Dusky notothen) protein is Hemoglobin subunit alpha-1 (hba1).